A 529-amino-acid polypeptide reads, in one-letter code: Extracellular signal-regulated kinase 1 (529 aa).

Disordered regions lie at residues 1-20 (MEPE…THQS) and 100-131 (QQNQ…SNFN). A compositionally biased stretch (polar residues) spans 8 to 20 (FQSQMDSDNTHQS). Positions 100–117 (QQNQQQQSQQMTQQQLQQ) are enriched in low complexity. One can recognise a Protein kinase domain in the interval 149–439 (YSIVKCIGHG…EALAHPYFQS (291 aa)). Residues 155 to 163 (IGHGAYGVV) and K178 each bind ATP. The active-site Proton acceptor is the D275. At T309 the chain carries Phosphothreonine. The TXY signature appears at 309 to 311 (TEY). Y311 carries the phosphotyrosine modification.

The protein belongs to the protein kinase superfamily. CMGC Ser/Thr protein kinase family. MAP kinase subfamily. Mg(2+) is required as a cofactor. Post-translationally, dually phosphorylated on Thr-309 and Tyr-311, which activates the enzyme.

It catalyses the reaction L-seryl-[protein] + ATP = O-phospho-L-seryl-[protein] + ADP + H(+). The catalysed reaction is L-threonyl-[protein] + ATP = O-phospho-L-threonyl-[protein] + ADP + H(+). With respect to regulation, activated by tyrosine and threonine phosphorylation. In terms of biological role, kinase involved in a signal transduction pathway. The chain is Extracellular signal-regulated kinase 1 (erkA) from Dictyostelium discoideum (Social amoeba).